The chain runs to 351 residues: Protein RecA (351 aa).

73 to 80 (GPESSGKT) is a binding site for ATP.

The protein belongs to the RecA family.

It localises to the cytoplasm. Functionally, can catalyze the hydrolysis of ATP in the presence of single-stranded DNA, the ATP-dependent uptake of single-stranded DNA by duplex DNA, and the ATP-dependent hybridization of homologous single-stranded DNAs. It interacts with LexA causing its activation and leading to its autocatalytic cleavage. This Herbaspirillum seropedicae protein is Protein RecA.